A 229-amino-acid polypeptide reads, in one-letter code: UPF0173 metal-dependent hydrolase SERP1270 (229 aa).

This sequence belongs to the UPF0173 family.

This chain is UPF0173 metal-dependent hydrolase SERP1270, found in Staphylococcus epidermidis (strain ATCC 35984 / DSM 28319 / BCRC 17069 / CCUG 31568 / BM 3577 / RP62A).